Here is a 160-residue protein sequence, read N- to C-terminus: SsrA-binding protein (160 aa).

The protein belongs to the SmpB family.

The protein localises to the cytoplasm. Functionally, required for rescue of stalled ribosomes mediated by trans-translation. Binds to transfer-messenger RNA (tmRNA), required for stable association of tmRNA with ribosomes. tmRNA and SmpB together mimic tRNA shape, replacing the anticodon stem-loop with SmpB. tmRNA is encoded by the ssrA gene; the 2 termini fold to resemble tRNA(Ala) and it encodes a 'tag peptide', a short internal open reading frame. During trans-translation Ala-aminoacylated tmRNA acts like a tRNA, entering the A-site of stalled ribosomes, displacing the stalled mRNA. The ribosome then switches to translate the ORF on the tmRNA; the nascent peptide is terminated with the 'tag peptide' encoded by the tmRNA and targeted for degradation. The ribosome is freed to recommence translation, which seems to be the essential function of trans-translation. The polypeptide is SsrA-binding protein (Escherichia coli O6:K15:H31 (strain 536 / UPEC)).